The following is a 57-amino-acid chain: COP9 signalosome complex subunit 9 (57 aa).

At Thr-26 the chain carries Phosphothreonine.

It belongs to the CSN9 family. As to quaternary structure, component of the CSN complex, composed of COPS1/GPS1, COPS2, COPS3, COPS4, COPS5, COPS6, COPS7 (COPS7A or COPS7B), COPS8 and COPS9. In the complex, it interacts directly with COPS3, COPS5 and COPS6.

It localises to the nucleus. Its subcellular location is the cytoplasm. The protein localises to the nucleoplasm. Its function is as follows. Component of the COP9 signalosome complex (CSN), a complex involved in various cellular and developmental processes. The CSN complex is an essential regulator of the ubiquitin (Ubl) conjugation pathway by mediating the deneddylation of the cullin subunits of SCF-type E3 ligase complexes, leading to decrease the Ubl ligase activity of SCF-type complexes such as SCF, CSA or DDB2. The complex is also involved in phosphorylation of p53/TP53, c-jun/JUN, IkappaBalpha/NFKBIA, ITPK1 and IRF8/ICSBP, possibly via its association with CK2 and PKD kinases. CSN-dependent phosphorylation of TP53 and JUN promotes and protects degradation by the Ubl system, respectively. Plays a role in cell proliferation. This chain is COP9 signalosome complex subunit 9, found in Mus musculus (Mouse).